The chain runs to 1305 residues: MNKIYALKYCHATGGLIAVSELASRVMKKAARGSLLALFNLSLYGAFLSASQAAQLNIDNVWARDYLDLAQNKGVFKAGATNVSIQLKNGQTFNFPNVPIPDFSPASNKGATTSIGGAYSVTATHNGTTHHAISTQNWGQSSYKYIDRMTNGDFAVTRLDKFVVETTGVKNSVDFSLNSHDALERYGVEINGEKKIIGFRVGAGTTYTVQNGNTYSTGQVYNPLLLSASMFQLNWDNKRPYNNTTPFYNETTGGDSGSGFYLYDNVKKEWVMLGTLFGIASSGADVWSILNQYDENTVNGLKNKFTQKVQLNNNTMSLNSDSFTLAGNNTAVEKNNNNYKDLSFSGGGSINFDNDVNIGSGGLIFDAGHHYTVTGNNKTFKGAGLDIGDNTTVDWNVKGVVGDNLHKIGAGTLNVNVSQGNNLKTGDGLVVLNSANAFDNIYMASGHGVVKINHSAALNQNNDYRGIFFTENGGTLDLNGYDQSFNKIAATDIGALITNSAVQKAVLSVNNQSNYMYHGSVSGNTEINHQFDTQKNNSRLILDGNVDITNDINIKNSQLTMQGHATSHAVFREGGVTCMLPGVICEKDYVSGIQQQENSANKNNNTDYKTNNQVSSFEQPDWENRLFKFKTLNLINSDFIVGRNAIVVGDISANNSTLSLSGKDTKVHIDMYDGKNITGDGFGFRQDIKDGVSVSPESSSYFGNVTLNNHSLLDIGNKFTGGIEAYDSSVSVTSQNAVFDRVGSFVNSSLTLEKGAKLTAQGGIFSTGAVDVKENASLILTGTPSAQKQEYYSPVISTTEGINLGDKASLSVKNMGYLSSDIHAGTTAATINLGDGDAETDSPLFSSLMKGYNAVLSGNITGEQSTVNMNNALWYSDGNSTIGTLKSTGGRVELGGGKDFATLRVKELNANNATFLMHTNNSQADQLNVTNKLLGSNNTVLVDFLNKPASEMNVTLITAPKGSDEKTFTAGTQQIGFSNVTPVISTEKTDDATKWMLTGYQTVSDAGASKTATDFMASGYKSFLTEVNNLNKRMGDLRDTQGDAGVWARIMNGTGSADGGYSDNYTHVQIGADRKHELDGVDLFTGALLTYTDSNASSHAFSGKTKSVGGGLYASALFDSGAYFDLIGKYLHHDNQYTASFASLGTKDYSSHSWYAGAEVGYRYHLSEESWVEPQMELVYGSVSGKSFSWEDRGMALSMKDKDYNPLIGRTGVDVGRTFSGDDWKITARAGLGYQFDLLANGETVLRDASGEKRFEGEKDSRMLMNVGMNAEIKDNMRFGLELEKSAFGKYNVDNAINANFRYSF.

Residues methionine 1 to alanine 53 form the signal peptide. One can recognise a Peptidase S6 domain in the interval glutamine 55 to threonine 297. Residues histidine 125, aspartate 153, and serine 256 each act as charge relay system in the active site. The Autotransporter domain occupies aspartate 1039–phenylalanine 1305.

Cleaved to release the mature protein from the outer membrane.

Its subcellular location is the periplasm. It localises to the secreted. The protein resides in the cell surface. The protein localises to the cell outer membrane. With respect to regulation, inhibition of cytotoxic activity by phenylmethylsulfonyl fluoride. In terms of biological role, serine protease with enterotoxic and cytotoxic activities. Cleaves fodrin, but does not cause its redistribution within epithelial cells. The exact role of EspC in EPEC pathogenesis is still unknown. The chain is Serine protease EspC (espC) from Escherichia coli O127:H6 (strain E2348/69 / EPEC).